Here is a 434-residue protein sequence, read N- to C-terminus: Nicotinate phosphoribosyltransferase (434 aa).

Residue H242 is modified to Phosphohistidine; by autocatalysis.

Belongs to the NAPRTase family. In terms of processing, transiently phosphorylated on a His residue during the reaction cycle. Phosphorylation strongly increases the affinity for substrates and increases the rate of nicotinate D-ribonucleotide production. Dephosphorylation regenerates the low-affinity form of the enzyme, leading to product release.

The enzyme catalyses nicotinate + 5-phospho-alpha-D-ribose 1-diphosphate + ATP + H2O = nicotinate beta-D-ribonucleotide + ADP + phosphate + diphosphate. It functions in the pathway cofactor biosynthesis; NAD(+) biosynthesis; nicotinate D-ribonucleotide from nicotinate: step 1/1. Catalyzes the synthesis of beta-nicotinate D-ribonucleotide from nicotinate and 5-phospho-D-ribose 1-phosphate at the expense of ATP. This is Nicotinate phosphoribosyltransferase from Bartonella tribocorum (strain CIP 105476 / IBS 506).